We begin with the raw amino-acid sequence, 1400 residues long: DNA-directed RNA polymerase subunit beta' (1400 aa).

Zn(2+)-binding residues include Cys71, Cys73, Cys86, and Cys89. Mg(2+) contacts are provided by Asp462, Asp464, and Asp466. Zn(2+)-binding residues include Cys811, Cys885, Cys892, and Cys895.

Belongs to the RNA polymerase beta' chain family. As to quaternary structure, the RNAP catalytic core consists of 2 alpha, 1 beta, 1 beta' and 1 omega subunit. When a sigma factor is associated with the core the holoenzyme is formed, which can initiate transcription. The cofactor is Mg(2+). Zn(2+) is required as a cofactor.

It catalyses the reaction RNA(n) + a ribonucleoside 5'-triphosphate = RNA(n+1) + diphosphate. Its function is as follows. DNA-dependent RNA polymerase catalyzes the transcription of DNA into RNA using the four ribonucleoside triphosphates as substrates. The protein is DNA-directed RNA polymerase subunit beta' of Brucella suis biovar 1 (strain 1330).